A 342-amino-acid chain; its full sequence is UDP-3-O-acylglucosamine N-acyltransferase (342 aa).

Residue histidine 253 is the Proton acceptor of the active site.

The protein belongs to the transferase hexapeptide repeat family. LpxD subfamily. Homotrimer.

It catalyses the reaction a UDP-3-O-[(3R)-3-hydroxyacyl]-alpha-D-glucosamine + a (3R)-hydroxyacyl-[ACP] = a UDP-2-N,3-O-bis[(3R)-3-hydroxyacyl]-alpha-D-glucosamine + holo-[ACP] + H(+). It functions in the pathway bacterial outer membrane biogenesis; LPS lipid A biosynthesis. Functionally, catalyzes the N-acylation of UDP-3-O-acylglucosamine using 3-hydroxyacyl-ACP as the acyl donor. Is involved in the biosynthesis of lipid A, a phosphorylated glycolipid that anchors the lipopolysaccharide to the outer membrane of the cell. This Rickettsia bellii (strain RML369-C) protein is UDP-3-O-acylglucosamine N-acyltransferase.